Reading from the N-terminus, the 276-residue chain is Small ribosomal subunit protein uS2 (276 aa).

2 disordered regions span residues 209 to 233 (AQEAAAAAQAAKETAEPTTEGAADV) and 252 to 276 (VDWSAEGAQDWAADGAAEQATSSWE). Residues 211 to 231 (EAAAAAQAAKETAEPTTEGAA) are compositionally biased toward low complexity.

This sequence belongs to the universal ribosomal protein uS2 family. As to quaternary structure, component of the small ribosomal subunit. Mature ribosomes consist of a small (40S) and a large (60S) subunit. The 40S subunit contains about 33 different proteins and 1 molecule of RNA (18S). The 60S subunit contains about 49 different proteins and 3 molecules of RNA (25S, 5.8S and 5S). Interacts with RPS21.

The protein localises to the cytoplasm. Its function is as follows. Required for the assembly and/or stability of the 40S ribosomal subunit. Required for the processing of the 20S rRNA-precursor to mature 18S rRNA in a late step of the maturation of 40S ribosomal subunits. The sequence is that of Small ribosomal subunit protein uS2 from Mycosarcoma maydis (Corn smut fungus).